Consider the following 322-residue polypeptide: Acetyl-coenzyme A carboxylase carboxyl transferase subunit alpha (322 aa).

A CoA carboxyltransferase C-terminal domain is found at 30–293; it reads ALDISAEIAR…KQTLQESLRK (264 aa).

Belongs to the AccA family. As to quaternary structure, acetyl-CoA carboxylase is a heterohexamer composed of biotin carboxyl carrier protein (AccB), biotin carboxylase (AccC) and two subunits each of ACCase subunit alpha (AccA) and ACCase subunit beta (AccD).

The protein localises to the cytoplasm. The enzyme catalyses N(6)-carboxybiotinyl-L-lysyl-[protein] + acetyl-CoA = N(6)-biotinyl-L-lysyl-[protein] + malonyl-CoA. It functions in the pathway lipid metabolism; malonyl-CoA biosynthesis; malonyl-CoA from acetyl-CoA: step 1/1. In terms of biological role, component of the acetyl coenzyme A carboxylase (ACC) complex. First, biotin carboxylase catalyzes the carboxylation of biotin on its carrier protein (BCCP) and then the CO(2) group is transferred by the carboxyltransferase to acetyl-CoA to form malonyl-CoA. The protein is Acetyl-coenzyme A carboxylase carboxyl transferase subunit alpha of Nitrosomonas europaea (strain ATCC 19718 / CIP 103999 / KCTC 2705 / NBRC 14298).